The following is a 297-amino-acid chain: tRNA uridine(34) hydroxylase (297 aa).

A Rhodanese domain is found at 133 to 228; it reads RGEEVVFFDG…YGETFKDQGL (96 aa). The active-site Cysteine persulfide intermediate is Cys188.

This sequence belongs to the TrhO family.

It carries out the reaction uridine(34) in tRNA + AH2 + O2 = 5-hydroxyuridine(34) in tRNA + A + H2O. Catalyzes oxygen-dependent 5-hydroxyuridine (ho5U) modification at position 34 in tRNAs. The sequence is that of tRNA uridine(34) hydroxylase from Arthrobacter sp. (strain FB24).